The chain runs to 465 residues: UDP-N-acetylmuramate--L-alanine ligase (465 aa).

112 to 118 provides a ligand contact to ATP; the sequence is GTHGKTT.

This sequence belongs to the MurCDEF family.

The protein localises to the cytoplasm. It catalyses the reaction UDP-N-acetyl-alpha-D-muramate + L-alanine + ATP = UDP-N-acetyl-alpha-D-muramoyl-L-alanine + ADP + phosphate + H(+). It functions in the pathway cell wall biogenesis; peptidoglycan biosynthesis. Its function is as follows. Cell wall formation. The protein is UDP-N-acetylmuramate--L-alanine ligase of Burkholderia thailandensis (strain ATCC 700388 / DSM 13276 / CCUG 48851 / CIP 106301 / E264).